A 230-amino-acid chain; its full sequence is UPF0502 protein Oter_3715 (230 aa).

It belongs to the UPF0502 family.

The polypeptide is UPF0502 protein Oter_3715 (Opitutus terrae (strain DSM 11246 / JCM 15787 / PB90-1)).